We begin with the raw amino-acid sequence, 499 residues long: Ethanolamine-phosphate phospho-lyase (499 aa).

Lys-278 bears the N6-(pyridoxal phosphate)lysine mark. Basic and acidic residues predominate over residues 468–479 (RDSTTDSKENPS). Residues 468-499 (RDSTTDSKENPSRKRNGMCTDTHSLLSKRLKT) are disordered.

The protein belongs to the class-III pyridoxal-phosphate-dependent aminotransferase family. In terms of assembly, homotetramer. Pyridoxal 5'-phosphate serves as cofactor.

The protein resides in the mitochondrion. The enzyme catalyses phosphoethanolamine + H2O = acetaldehyde + NH4(+) + phosphate. In terms of biological role, catalyzes the pyridoxal-phosphate-dependent breakdown of phosphoethanolamine, converting it to ammonia, inorganic phosphate and acetaldehyde. In Homo sapiens (Human), this protein is Ethanolamine-phosphate phospho-lyase (ETNPPL).